Here is a 94-residue protein sequence, read N- to C-terminus: MTINYQFGDVDAHGAMIRAQAGLLEAEHQAIVRDVLAAGDFWGGAGSAACQGFITQLGRNFQVIYEQANAHGQKVQAAGNNMAQTDSAVGSSWA.

The protein belongs to the WXG100 family. ESAT-6 subfamily. Strongly interacts with EsxK to form a heterodimeric complex under reducing conditions.

The protein localises to the secreted. The polypeptide is ESAT-6-like protein EsxL (Mycobacterium tuberculosis (strain CDC 1551 / Oshkosh)).